The primary structure comprises 2176 residues: Protein eyes shut (2176 aa).

Topologically, residues 1–122 are cytoplasmic; the sequence is MSNVHQFDTQ…NPNILLPTLR (122 aa). A helical transmembrane segment spans residues 123 to 143; that stretch reads ILARGLLLPALILAILVGSSQ. One can recognise an EGF-like 1 domain in the interval 144–180; sequence AGFACLSNPCVFGVCIDGLNSSYSCYCIDGYTGIQCQ. Residues 144–2176 are Extracellular-facing; sequence AGFACLSNPC…DLHGDEPLTV (2033 aa). Disulfide bonds link Cys148-Cys158, Cys153-Cys168, Cys170-Cys179, Cys186-Cys197, Cys191-Cys206, Cys208-Cys217, Cys224-Cys235, Cys229-Cys244, Cys246-Cys255, Cys262-Cys276, Cys270-Cys286, Cys288-Cys297, Cys304-Cys315, Cys309-Cys324, Cys326-Cys335, Cys342-Cys353, Cys347-Cys362, Cys364-Cys373, Cys380-Cys392, Cys386-Cys401, and Cys403-Cys412. A glycan (N-linked (GlcNAc...) asparagine) is linked at Asn163. Residues 182–218 form the EGF-like 2; calcium-binding domain; the sequence is NWDECWSSPCQNGGTCVDGVAYYNCTCPEGFSGSNCE. Residue Asn205 is glycosylated (N-linked (GlcNAc...) asparagine). Residues 220–256 enclose the EGF-like 3; calcium-binding domain; the sequence is NVDECMSNPCQNGGLCRDRTNGYICTCQPGYLGSHCE. The EGF-like 4 domain maps to 258-298; that stretch reads DVAVCETGTGARCQHGGECIEGPGLEFTCDCPAGWHGRICQ. The EGF-like 5; calcium-binding domain occupies 300–336; sequence EINECASSPCQNGGVCVDKLAAYACACPMGYTGINCE. The region spanning 338 to 374 is the EGF-like 6 domain; that stretch reads EILICADNPCQNNALCLMEEGVPTCYCVPDYHGEKCE. Residues 376–413 enclose the EGF-like 7; calcium-binding domain; it reads QYDECQLGPRCMNGGVCIDGVDTFSCSCPPLLTGMLCE. N-linked (GlcNAc...) asparagine glycosylation occurs at Asn425. Composition is skewed to low complexity over residues 429–447 and 482–502; these read PATQ…MAPP and VTSV…VSVE. Disordered regions lie at residues 429–465, 482–639, 757–783, 802–854, and 902–1014; these read PATQ…SRAS, VTSV…RPTA, RFTT…LPTP, LITT…VEIT, and APPA…GVPE. The span at 514–526 shows a compositional bias: polar residues; it reads GSHSISVEQTTAV. Acidic residues predominate over residues 548–560; the sequence is SASESETETEEEI. Composition is skewed to low complexity over residues 564 to 582 and 596 to 632; these read TTAR…ESPS and TSAS…SEEV. A compositionally biased stretch (polar residues) spans 757–775; sequence RFTTVQPPAGVTTTSPTED. Basic residues predominate over residues 811 to 820; it reads THHHHHHHPH. Pro residues-rich tracts occupy residues 904 to 922 and 930 to 955; these read PATP…PSPP and TLPP…PTPP. An EGF-like 8 domain is found at 1018–1054; it reads GDVDCIKLGCYNGGTCVTTSEGSRCVCRFDRQGPLCE. 3 cysteine pairs are disulfide-bonded: Cys1022–Cys1033, Cys1027–Cys1042, and Cys1044–Cys1053. The Laminin G-like 1 domain maps to 1059–1266; it reads IRNAAFSGDS…GITECGSLAC (208 aa). Residues Asn1165, Asn1170, and Asn1176 are each glycosylated (N-linked (GlcNAc...) asparagine). In terms of domain architecture, EGF-like 9 spans 1309–1346; that stretch reads EISVCEDNPCQYGGTCVQFPGSGYLCLCPLGKHGHYCE. 3 cysteine pairs are disulfide-bonded: Cys1313-Cys1324, Cys1318-Cys1334, and Cys1336-Cys1345. The 197-residue stretch at 1353–1549 folds into the Laminin G-like 2 domain; it reads LPSFSGSVNG…GVGQCGTREC (197 aa). A glycan (N-linked (GlcNAc...) asparagine) is linked at Asn1471. 2 EGF-like domains span residues 1545 to 1581 and 1583 to 1621; these read GTRE…PLCA and PTNP…KNCE. 6 disulfide bridges follow: Cys1549–Cys1560, Cys1554–Cys1569, Cys1571–Cys1580, Cys1587–Cys1600, Cys1594–Cys1609, and Cys1611–Cys1620. N-linked (GlcNAc...) asparagine glycosylation is found at Asn1665 and Asn1861. A Laminin G-like 3 domain is found at 1692-1879; the sequence is EKQRSFSPVP…NIRDCDGTAC (188 aa). EGF-like domains follow at residues 1875–1912 and 1913–1946; these read DGTA…DRCE and YSET…FYCE. Intrachain disulfides connect Cys1879-Cys1890, Cys1884-Cys1900, Cys1902-Cys1911, Cys1917-Cys1928, Cys1922-Cys1934, and Cys1936-Cys1945. The region spanning 1952 to 2166 is the Laminin G-like 4 domain; that stretch reads PTTPSFRGNS…TYQGENIGSC (215 aa). Residues Asn1994, Asn2035, and Asn2099 are each glycosylated (N-linked (GlcNAc...) asparagine). The tract at residues 2080–2101 is disordered; the sequence is GGRSLGSTTPRSTLAGRRKNSS.

This sequence belongs to the EYS family. Expressed from the beginning of rhabdomere biogenesis (48 hours after pupal formation), when it decorates the entire photoreceptor apical surface.

The protein resides in the membrane. The protein localises to the secreted. Its function is as follows. Essential for the formation of matrix-filled interrhabdomeral space: critical for the formation of epithelial lumina in the retina. Acts together with prominin (prom) and the cell adhesion molecule chaoptin (chp) to choreograph the partitioning of rhabdomeres into an open system. The protein is Protein eyes shut of Drosophila melanogaster (Fruit fly).